The chain runs to 49 residues: Splenin (49 aa).

Positions 4-47 constitute an LEM-like domain; it reads LEDPSVLTKEKLKSELVANNVTLPAGEQRKEVYVELYLQHLTAL. The essential for biological activity stretch occupies residues 32–36; sequence RKEVY.

It belongs to the thymopoietin family.

In terms of biological role, hormone of the spleen with pleiotropic actions on prothymocytes, mature T-cells, the nicotinic acetylcholine receptor, and pituitary corticotrophs. The protein is Splenin (SP) of Bos taurus (Bovine).